The following is a 459-amino-acid chain: UDP-N-acetylmuramate--L-alanine ligase (459 aa).

Position 118–124 (118–124 (GTHGKTT)) interacts with ATP.

This sequence belongs to the MurCDEF family.

The protein localises to the cytoplasm. The catalysed reaction is UDP-N-acetyl-alpha-D-muramate + L-alanine + ATP = UDP-N-acetyl-alpha-D-muramoyl-L-alanine + ADP + phosphate + H(+). The protein operates within cell wall biogenesis; peptidoglycan biosynthesis. Its function is as follows. Cell wall formation. In Clostridium beijerinckii (strain ATCC 51743 / NCIMB 8052) (Clostridium acetobutylicum), this protein is UDP-N-acetylmuramate--L-alanine ligase.